We begin with the raw amino-acid sequence, 965 residues long: Sarcosine oxidase subunit alpha (965 aa).

Residues alanine 139, aspartate 158, glutamate 159, arginine 160, threonine 166, valine 205, alanine 418, leucine 423, and threonine 425 each contribute to the NAD(+) site. Residues threonine 692 and glutamate 784 each coordinate (6R)-5,10-methylene-5,6,7,8-tetrahydrofolate.

It belongs to the GcvT family. As to quaternary structure, heterotetramer composed of subunits alpha (SoxA), beta (SoxB), gamma (SoxG) and delta (SoxD). NAD(+) is required as a cofactor.

The protein resides in the cytoplasm. The catalysed reaction is sarcosine + (6S)-5,6,7,8-tetrahydrofolate + O2 = (6R)-5,10-methylene-5,6,7,8-tetrahydrofolate + glycine + H2O2. It carries out the reaction sarcosine + O2 + H2O = formaldehyde + glycine + H2O2. Its activity is regulated as follows. Inhibited by Zn(2+), Cu(2+), Cd(2+), Hg(2+), Ag(+), p-chloromercuribenzoate (p-CMB), iodoacetamide, N-ethylmaleimide, CN(-), o-phenanthroline and sodium lauryl sulfate. Functionally, in the presence of tetrahydrofolate, catalyzes the oxidative demethylation of sarcosine to yield glycine, 5,10-methylenetetrahydrofolate and hydrogen peroxide. In the absence of tetrahydrofolate, catalyzes the oxidative demethylation of sarcosine to yield glycine, formaldehyde and hydrogen peroxide. Can also use N-methyl-L-alanine and N-ethyl-L-glycine. Is very specific for oxygen as an acceptor. This Corynebacterium sp. (strain U-96) protein is Sarcosine oxidase subunit alpha.